Consider the following 122-residue polypeptide: Large ribosomal subunit protein eL34 (122 aa).

It belongs to the eukaryotic ribosomal protein eL34 family.

This is Large ribosomal subunit protein eL34 (rpl34) from Dictyostelium discoideum (Social amoeba).